The following is a 217-amino-acid chain: Ribosomal RNA small subunit methyltransferase G (217 aa).

S-adenosyl-L-methionine contacts are provided by residues Gly-76, Phe-81, 128 to 129 (LE), and Arg-142.

The protein belongs to the methyltransferase superfamily. RNA methyltransferase RsmG family.

The protein resides in the cytoplasm. The enzyme catalyses guanosine(527) in 16S rRNA + S-adenosyl-L-methionine = N(7)-methylguanosine(527) in 16S rRNA + S-adenosyl-L-homocysteine. Functionally, specifically methylates the N7 position of guanine in position 527 of 16S rRNA. The protein is Ribosomal RNA small subunit methyltransferase G of Rhizorhabdus wittichii (strain DSM 6014 / CCUG 31198 / JCM 15750 / NBRC 105917 / EY 4224 / RW1) (Sphingomonas wittichii).